The primary structure comprises 132 residues: Transcriptional repressor SmtB homolog (132 aa).

Positions 20, 26, 71, 73, 114, 116, 127, and 130 each coordinate Zn(2+). The HTH arsR-type domain maps to 38 to 132 (MSLDQAQQMA…EVADHLQESD (95 aa)). A DNA-binding region (H-T-H motif) is located at residues 72–91 (VCDLAAAMKVSESAVSHQLR).

As to quaternary structure, homodimer.

Its function is as follows. Transcriptional repressor of the expression of the ziaA gene. Controls zinc homeostasis by triggering ZiaA-mediated efflux of excess zinc into the periplasm. The sequence is that of Transcriptional repressor SmtB homolog (ziaR) from Synechocystis sp. (strain ATCC 27184 / PCC 6803 / Kazusa).